Here is an 85-residue protein sequence, read N- to C-terminus: MSDKIRTLQGRVISDKMEKSFTIAIARYVKHPIYGKFIRRTTKLHVHDENNEVQAGDVVTIRECAPISKSKSWTFVAVIERPKQA.

The protein belongs to the universal ribosomal protein uS17 family. Part of the 30S ribosomal subunit.

Functionally, one of the primary rRNA binding proteins, it binds specifically to the 5'-end of 16S ribosomal RNA. The protein is Small ribosomal subunit protein uS17 of Pseudoalteromonas translucida (strain TAC 125).